A 440-amino-acid chain; its full sequence is Transposon Ty1-GR1 Gag polyprotein (440 aa).

Positions 1–16 (MESQQLSQHSHISHGS) are enriched in low complexity. Disordered stretches follow at residues 1 to 93 (MESQ…MMTQ), 126 to 173 (PQSQ…RPPP), and 352 to 440 (GSRN…PGTY). Polar residues-rich tracts occupy residues 48–60 (TKAN…TPAS), 71–93 (SPQT…MMTQ), and 127–152 (QSQF…GNTF). Low complexity predominate over residues 153 to 165 (TDSSSADSDMTST). Positions 299 to 401 (NNGIHINNKV…NSKSKTARAH (103 aa)) are RNA-binding. Residues 402–418 (NVSTSNNSPSTDNDSIS) are compositionally biased toward low complexity. Ser416 carries the post-translational modification Phosphoserine. The span at 419 to 428 (KSTTEPIQLN) shows a compositional bias: polar residues. Residues 429–440 (NKHDLHLRPGTY) are compositionally biased toward basic and acidic residues.

Homotrimer.

It is found in the cytoplasm. Functionally, capsid protein (CA) is the structural component of the virus-like particle (VLP), forming the shell that encapsulates the retrotransposons dimeric RNA genome. The particles are assembled from trimer-clustered units and there are holes in the capsid shells that allow for the diffusion of macromolecules. CA also has nucleocapsid-like chaperone activity, promoting primer tRNA(i)-Met annealing to the multipartite primer-binding site (PBS), dimerization of Ty1 RNA and initiation of reverse transcription. This Saccharomyces cerevisiae (strain ATCC 204508 / S288c) (Baker's yeast) protein is Transposon Ty1-GR1 Gag polyprotein (TY1A-GR1).